Here is a 361-residue protein sequence, read N- to C-terminus: tRNA 2-selenouridine synthase (361 aa).

A Rhodanese domain is found at 12–135 (VLKNIPLIDV…FRRYLIDHLE (124 aa)). Residue Cys95 is the S-selanylcysteine intermediate of the active site.

The protein belongs to the SelU family. Monomer.

The enzyme catalyses 5-methylaminomethyl-2-thiouridine(34) in tRNA + selenophosphate + (2E)-geranyl diphosphate + H2O + H(+) = 5-methylaminomethyl-2-selenouridine(34) in tRNA + (2E)-thiogeraniol + phosphate + diphosphate. It carries out the reaction 5-methylaminomethyl-2-thiouridine(34) in tRNA + (2E)-geranyl diphosphate = 5-methylaminomethyl-S-(2E)-geranyl-thiouridine(34) in tRNA + diphosphate. The catalysed reaction is 5-methylaminomethyl-S-(2E)-geranyl-thiouridine(34) in tRNA + selenophosphate + H(+) = 5-methylaminomethyl-2-(Se-phospho)selenouridine(34) in tRNA + (2E)-thiogeraniol. It catalyses the reaction 5-methylaminomethyl-2-(Se-phospho)selenouridine(34) in tRNA + H2O = 5-methylaminomethyl-2-selenouridine(34) in tRNA + phosphate. Involved in the post-transcriptional modification of the uridine at the wobble position (U34) of tRNA(Lys), tRNA(Glu) and tRNA(Gln). Catalyzes the conversion of 2-thiouridine (S2U-RNA) to 2-selenouridine (Se2U-RNA). Acts in a two-step process involving geranylation of 2-thiouridine (S2U) to S-geranyl-2-thiouridine (geS2U) and subsequent selenation of the latter derivative to 2-selenouridine (Se2U) in the tRNA chain. This chain is tRNA 2-selenouridine synthase, found in Hydrogenovibrio crunogenus (strain DSM 25203 / XCL-2) (Thiomicrospira crunogena).